We begin with the raw amino-acid sequence, 340 residues long: uncharacterized protein (340 aa).

Positions 193-207 (KELPKEKKKSDGDKT) are enriched in basic and acidic residues. Positions 193–340 (KELPKEKKKS…FIPLQPKKKI (148 aa)) are disordered. A compositionally biased stretch (low complexity) spans 217–228 (FFGFWGHSGSKS). Over residues 235–244 (EKPIEAKNEI) the composition is skewed to basic and acidic residues. 2 stretches are compositionally biased toward polar residues: residues 263–279 (SDKN…SDQQ) and 307–328 (PAQS…SLTL).

This is an uncharacterized protein from Saccharomyces cerevisiae (strain ATCC 204508 / S288c) (Baker's yeast).